Consider the following 713-residue polypeptide: Polyphosphate kinase (713 aa).

Asparagine 63 is a binding site for ATP. Mg(2+)-binding residues include arginine 394 and arginine 424. The active-site Phosphohistidine intermediate is the histidine 454. ATP contacts are provided by tyrosine 487, arginine 583, and histidine 611.

The protein belongs to the polyphosphate kinase 1 (PPK1) family. Mg(2+) serves as cofactor. In terms of processing, an intermediate of this reaction is the autophosphorylated ppk in which a phosphate is covalently linked to a histidine residue through a N-P bond.

It catalyses the reaction [phosphate](n) + ATP = [phosphate](n+1) + ADP. Its function is as follows. Catalyzes the reversible transfer of the terminal phosphate of ATP to form a long-chain polyphosphate (polyP). In Prosthecochloris aestuarii (strain DSM 271 / SK 413), this protein is Polyphosphate kinase.